Reading from the N-terminus, the 693-residue chain is tRNA (guanine(37)-N(1))-methyltransferase (693 aa).

Residues Arg327, 365 to 366 (DI), and 392 to 393 (DA) contribute to the S-adenosyl-L-methionine site. Residues 497 to 572 (AGDSHQSNSH…QKAEDAPTNE (76 aa)) are disordered. Residues 500–512 (SHQSNSHQSNPHE) show a composition bias toward low complexity. Asn591 is a binding site for S-adenosyl-L-methionine.

The protein belongs to the class I-like SAM-binding methyltransferase superfamily. TRM5/TYW2 family. As to quaternary structure, monomer.

It localises to the mitochondrion matrix. It is found in the nucleus. The protein resides in the cytoplasm. The enzyme catalyses guanosine(37) in tRNA + S-adenosyl-L-methionine = N(1)-methylguanosine(37) in tRNA + S-adenosyl-L-homocysteine + H(+). Its function is as follows. Specifically methylates the N1 position of guanosine-37 in various cytoplasmic and mitochondrial tRNAs. Methylation is not dependent on the nature of the nucleoside 5' of the target nucleoside. This is the first step in the biosynthesis of wybutosine (yW), a modified base adjacent to the anticodon of tRNAs and required for accurate decoding. The chain is tRNA (guanine(37)-N(1))-methyltransferase from Plasmodium vivax (strain Salvador I).